A 294-amino-acid chain; its full sequence is Probable 2-(5''-triphosphoribosyl)-3'-dephosphocoenzyme-A synthase (294 aa).

Belongs to the CitG/MdcB family.

It carries out the reaction 3'-dephospho-CoA + ATP = 2'-(5''-triphospho-alpha-D-ribosyl)-3'-dephospho-CoA + adenine. The polypeptide is Probable 2-(5''-triphosphoribosyl)-3'-dephosphocoenzyme-A synthase (Streptococcus pyogenes serotype M5 (strain Manfredo)).